The primary structure comprises 427 residues: Histidine--tRNA ligase (427 aa).

The protein belongs to the class-II aminoacyl-tRNA synthetase family. As to quaternary structure, homodimer.

The protein resides in the cytoplasm. The enzyme catalyses tRNA(His) + L-histidine + ATP = L-histidyl-tRNA(His) + AMP + diphosphate + H(+). In Mannheimia succiniciproducens (strain KCTC 0769BP / MBEL55E), this protein is Histidine--tRNA ligase.